The chain runs to 272 residues: uncharacterized protein (272 aa).

It belongs to the chlamydial CPn_0389/CT_041/TC_0311 family.

This is an uncharacterized protein from Chlamydia pneumoniae (Chlamydophila pneumoniae).